Consider the following 166-residue polypeptide: Large ribosomal subunit protein uL11 (166 aa).

The protein belongs to the universal ribosomal protein uL11 family. As to quaternary structure, part of the ribosomal stalk of the 50S ribosomal subunit. Interacts with L10 and the large rRNA to form the base of the stalk. L10 forms an elongated spine to which L12 dimers bind in a sequential fashion forming a multimeric L10(L12)X complex.

Functionally, forms part of the ribosomal stalk which helps the ribosome interact with GTP-bound translation factors. The sequence is that of Large ribosomal subunit protein uL11 from Methanopyrus kandleri (strain AV19 / DSM 6324 / JCM 9639 / NBRC 100938).